The primary structure comprises 530 residues: MKIPSLVGPDGKTSLREYAGYHGGGGGFGGQLRGWNPPSESADAALLPNYSRGNARADDLVRNNGYAANAVQLHQDHIVGSFFRLSYRPSWRYLGINEEDSRAFSRDVEAAWNEYAEDDFCGIDAERKRTFTMMIREGVAMHAFNGELCVQATWDSDSTRLFRTQFKMVSPKRVSNPNNIGDTRNCRAGVKINDSGAALGYYVSDDGYPGWMAQNWTYIPRELPGGRPSFIHVFEPMEDGQTRGANAFYSVMEQMKMLDTLQNTQLQSAIVKAMYAATIESELDTQSAMDFILGADNKEQQSKLTGWLGEMAAYYSAAPVRLGGARVPHLLPGDSLNLQSAQDTDNGYSTFEQSLLRYIAAGLGVSYEQLSRNYSQMSYSTARASANESWAYFMGRRKFVASRQACQMFLCWLEEAIVRRVVTLPSKARFSFQEARTAWGNANWIGSGRMAIDGLKEVQEAVMLIEAGLSTYEKECAKRGDDYQEIFAQQVRESMERRAAGLNPPAWAAAAFEAGVKKSNEEEQDGARAA.

It belongs to the siphoviridae portal protein family. As to quaternary structure, homododecamer. Interacts with the terminase complex composed of two small and one large terminase subunits. In terms of processing, proteolytically cleaved by the viral protease during capsid maturation.

The protein localises to the virion. Forms the portal vertex of the capsid. This portal plays critical roles in head assembly, genome packaging, neck/tail attachment, and genome ejection. The portal protein multimerizes as a single ring-shaped homododecamer arranged around a central channel. Binds to the terminase subunits to form the packaging machine. This chain is Portal protein, found in Escherichia phage N15 (Bacteriophage N15).